The following is a 147-amino-acid chain: Large ribosomal subunit protein bL9 (147 aa).

The protein belongs to the bacterial ribosomal protein bL9 family.

Functionally, binds to the 23S rRNA. The chain is Large ribosomal subunit protein bL9 from Nitratiruptor sp. (strain SB155-2).